A 121-amino-acid polypeptide reads, in one-letter code: Small ribosomal subunit protein uS13 (121 aa).

Residues 93–121 form a disordered region; sequence RNLPVRGQRTRTNARTCKGPRKSMNKQFK. Over residues 110 to 121 the composition is skewed to basic residues; that stretch reads KGPRKSMNKQFK.

This sequence belongs to the universal ribosomal protein uS13 family. In terms of assembly, part of the 30S ribosomal subunit. Forms a loose heterodimer with protein S19. Forms two bridges to the 50S subunit in the 70S ribosome.

Its function is as follows. Located at the top of the head of the 30S subunit, it contacts several helices of the 16S rRNA. In the 70S ribosome it contacts the 23S rRNA (bridge B1a) and protein L5 of the 50S subunit (bridge B1b), connecting the 2 subunits; these bridges are implicated in subunit movement. Contacts the tRNAs in the A and P-sites. The polypeptide is Small ribosomal subunit protein uS13 (Blochmanniella pennsylvanica (strain BPEN)).